Consider the following 260-residue polypeptide: tRNA pseudouridine synthase A (260 aa).

Aspartate 51 acts as the Nucleophile in catalysis. Tyrosine 109 is a substrate binding site.

The protein belongs to the tRNA pseudouridine synthase TruA family. As to quaternary structure, homodimer.

The catalysed reaction is uridine(38/39/40) in tRNA = pseudouridine(38/39/40) in tRNA. Functionally, formation of pseudouridine at positions 38, 39 and 40 in the anticodon stem and loop of transfer RNAs. The chain is tRNA pseudouridine synthase A from Albidiferax ferrireducens (strain ATCC BAA-621 / DSM 15236 / T118) (Rhodoferax ferrireducens).